A 42-amino-acid chain; its full sequence is Photosystem II reaction center protein J (42 aa).

Residues 10–30 traverse the membrane as a helical segment; it reads IPLWFIGVIAGIAALSIVGLF.

This sequence belongs to the PsbJ family. In terms of assembly, PSII is composed of 1 copy each of membrane proteins PsbA, PsbB, PsbC, PsbD, PsbE, PsbF, PsbH, PsbI, PsbJ, PsbK, PsbL, PsbM, PsbT, PsbX, PsbY, PsbZ, Psb30/Ycf12, at least 3 peripheral proteins of the oxygen-evolving complex and a large number of cofactors. It forms dimeric complexes.

It is found in the plastid. Its subcellular location is the chloroplast thylakoid membrane. Functionally, one of the components of the core complex of photosystem II (PSII). PSII is a light-driven water:plastoquinone oxidoreductase that uses light energy to abstract electrons from H(2)O, generating O(2) and a proton gradient subsequently used for ATP formation. It consists of a core antenna complex that captures photons, and an electron transfer chain that converts photonic excitation into a charge separation. The polypeptide is Photosystem II reaction center protein J (Zygnema circumcarinatum (Green alga)).